The sequence spans 177 residues: GTP-dependent dephospho-CoA kinase (177 aa).

GTP-binding residues include D48, V49, V50, D67, K69, E124, and D147.

Belongs to the GTP-dependent DPCK family.

It carries out the reaction 3'-dephospho-CoA + GTP = GDP + CoA + H(+). It functions in the pathway cofactor biosynthesis; coenzyme A biosynthesis. Catalyzes the GTP-dependent phosphorylation of the 3'-hydroxyl group of dephosphocoenzyme A to form coenzyme A (CoA). The polypeptide is GTP-dependent dephospho-CoA kinase (Thermococcus onnurineus (strain NA1)).